Consider the following 363-residue polypeptide: Homeobox protein DTH-2 (363 aa).

The homeobox DNA-binding region spans 133–192; it reads RRKRRILFSQAQIYELERRFKQQKYLSAPEREHLANLINLTPTQVKIWFQNHRYKCKRSQ. The tract at residues 189–246 is disordered; it reads KRSQKDKEKEQQKEKSYHLKKNIVDDKERSPNKQICNASSSDRSTPEEPVAKAKESGL. A compositionally biased stretch (basic and acidic residues) spans 191–219; sequence SQKDKEKEQQKEKSYHLKKNIVDDKERSP. A compositionally biased stretch (polar residues) spans 220–231; sequence NKQICNASSSDR. Residues 232–246 are compositionally biased toward basic and acidic residues; sequence STPEEPVAKAKESGL.

The protein belongs to the NK-2 homeobox family. In terms of tissue distribution, intestine and unidentified peripheral parenchymal cells. Slightly higher levels in the cephalic region compared to other body regions.

It localises to the nucleus. Its function is as follows. This protein might be involved in determination and/or differentiation of nerve cells in the continuous replacement of neurons in the cephalic region. In Girardia tigrina (Planarian), this protein is Homeobox protein DTH-2 (DTH-2).